The primary structure comprises 510 residues: Anaerobic nitric oxide reductase transcription regulator NorR (510 aa).

Positions 188–417 constitute a Sigma-54 factor interaction domain; that stretch reads IIGNSQGMRT…LEHVIKRAAV (230 aa). Residues 216 to 223 and 279 to 288 contribute to the ATP site; these read GETGVGKE and ADGGTLFLDE. The segment at residues 486-505 is a DNA-binding region (H-T-H motif); sequence WAATARQLELDSGNLHRLAK.

It functions in the pathway nitrogen metabolism; nitric oxide reduction. Required for the expression of anaerobic nitric oxide (NO) reductase, acts as a transcriptional activator for at least the norVW operon. Activation also requires sigma-54. This is Anaerobic nitric oxide reductase transcription regulator NorR from Vibrio vulnificus (strain CMCP6).